The following is a 611-amino-acid chain: DNA mismatch repair protein MutL (611 aa).

It belongs to the DNA mismatch repair MutL/HexB family.

Functionally, this protein is involved in the repair of mismatches in DNA. It is required for dam-dependent methyl-directed DNA mismatch repair. May act as a 'molecular matchmaker', a protein that promotes the formation of a stable complex between two or more DNA-binding proteins in an ATP-dependent manner without itself being part of a final effector complex. In Bartonella bacilliformis (strain ATCC 35685 / KC583 / Herrer 020/F12,63), this protein is DNA mismatch repair protein MutL.